Consider the following 159-residue polypeptide: Pathogenesis-related leaf protein 6 (159 aa).

A signal peptide spans methionine 1–alanine 24. A Pyrrolidone carboxylic acid modification is found at glutamine 25. Positions leucine 32–tyrosine 147 constitute an SCP domain. 3 disulfide bridges follow: cysteine 68–cysteine 136, cysteine 109–cysteine 115, and cysteine 131–cysteine 145.

It belongs to the CRISP family.

Functionally, probably involved in the defense reaction of plants against pathogens. Has antifungal activity. This chain is Pathogenesis-related leaf protein 6 (PR1B1), found in Solanum lycopersicum (Tomato).